Here is a 235-residue protein sequence, read N- to C-terminus: Claudin-15 (235 aa).

A topological domain (cytoplasmic) is located at residue methionine 1. A helical membrane pass occupies residues 2 to 24 (LVAVEIFGFFLTAVGLLMLGVTL). At 25–74 (AHSSWRVSTVHGNVITTNTIFENLWYSCATDSMGVHNCWEFPSMLALSGY) the chain is on the extracellular side. Residues cysteine 52 and cysteine 62 are joined by a disulfide bond. A helical transmembrane segment spans residues 75 to 99 (IQACRALMITAILLGFLGLFLGMVG). Residues 100 to 115 (LRCTNIGGLELSRKTK) lie on the Cytoplasmic side of the membrane. The residue at position 111 (serine 111) is a Phosphoserine. Residues 116-140 (LAATAGALHILAGICGMVAVSWYAF) traverse the membrane as a helical segment. The Extracellular segment spans residues 141–159 (NITRDFFNPLYAGTKYELG). Positions 146–147 (FF) are important for the formation of tight-junction strand-like structures. Residues 160–182 (PALYLGWSACLLAILGGICLFSN) traverse the membrane as a helical segment. Over 183–235 (CCCSRDRDPATGVQLPYKAPVIPAASLAARLPAAASDEEGDSSFGKYGKNAYV) the chain is Cytoplasmic. Phosphoserine is present on residues serine 218 and serine 225.

The protein belongs to the claudin family. Can form homo- and heteropolymeric tight junction strands. In terms of processing, palmitoylated.

It localises to the cell junction. The protein localises to the tight junction. The protein resides in the cell membrane. It catalyses the reaction Na(+)(in) = Na(+)(out). It carries out the reaction K(+)(in) = K(+)(out). The enzyme catalyses Cs(+)(in) = Cs(+)(out). The catalysed reaction is Rb(+)(in) = Rb(+)(out). It catalyses the reaction Li(+)(in) = Li(+)(out). It carries out the reaction NH4(+)(in) = NH4(+)(out). The enzyme catalyses methylamine(out) = methylamine(in). The catalysed reaction is H2O(in) = H2O(out). In terms of biological role, forms paracellular channels: polymerizes in tight junction strands with cation- and water-selective channels through the strands, conveying epithelial permeability in a process known as paracellular tight junction permeability. In intestinal epithelium, allows for sodium and water fluxes from the peritoneal side to the lumen of the intestine to regulate nutrient absorption and intestinal morphogenesis. This is Claudin-15 (CLDN15) from Bos taurus (Bovine).